Reading from the N-terminus, the 248-residue chain is 14-3-3 protein (248 aa).

2 coiled-coil regions span residues Met-13–Ile-33 and Arg-91–Glu-111. Arg-135–Tyr-136 is an O-phospho-L-serine binding site. A Phosphothreonine modification is found at Thr-214. A Putative polyglycylation target motif (T/G)X0-1(D/E)X1-3-G(D/E)X1-2(gE)2-4, where X is polar or negatively charged amino acid, and gE is polyglycylated glutamine motif is present at residues Thr-237–Lys-248. At Glu-246 the chain carries 5-glutamyl polyglycine.

It belongs to the 14-3-3 family. Homodimer. Homodimerizes via N-terminal domains. Oligomerizes forming homotrimers, homotetramers and protein filaments. Oligomerization is hindered by polyglycylation in vivo. Interacts with a large number of both cytosolic and membrane proteins in trophozoites and encysting parasites. Interacts with a serine/threonine protein kinase GL50803_112076 (gCDC7). Component of a multiprotein complex containing gCDC7 and GL50803_94117 (gDBF4), a regulatory subunit of gCDC7, during both the trophozoite and encysting stages of the parasite. Interacts with fructose-bisphosphate aldolase GL50803_11043 (gFBA), pyruvate kinase GL50803_17143 (gPyk), acetyl-CoA synthetase GL50803_13608 (gACS), protein kinase GL50803_22165 (gSTE), DEAD box RNA helicase GL50803_34684 (gVASA) and Golgi/cell cycle associated protein GL50803_17472 (gGCCA). Interacts with actin. Interacts with both monomeric phosphorylated and unphosphorylated actin. The interaction is enhanced by phosphorylation of actin and inhibited by Rho GTPase Rac. In terms of processing, phosphorylated constitutively throughout the life cycle. Phosphorylation is very high in trophozoites and encysting cells of 12 hours. Phosphorylated during excystation. Phosphorylation promotes its binding to various target proteins and is critical for encystation process. Phosphorylation modification is not influenced by polyglycylation modification. Polyglycylated on a glutamate residue, resulting in polyglycine chain on the gamma-carboxyl group. Polyglycylated by the tubulin--tyrosine ligase-like protein GL50803_8456 (gTTLL3). The polyglycine chain is shortened by metallopeptidases of the M20 family, namely dipeptidases GL50803_15832 (gDIP1) and GL50803_8407 (gDIP2). The length of the polyglycine chain is developmental stage-dependent. In trophozoites, glycine residues range from 10 to 31, with the greatest occurrence of 21 residues. In 12 hour encystation stage, glycine residues range from 6 to 22, with the greatest occurrence of 10 residues. The differential rate of polyglycylation/deglycylation during the encystation process regulates the intracellular localization of this protein. Relocalizes partially from the cytoplasm inside the nuclei following the shortening of the polyglycine chain in encysting cells. Polyglycylation modification is not influenced by phosphorylation modification. Polyglycylation prevents oligomerization in vivo.

It localises to the cytoplasm. The protein resides in the cytoskeleton. It is found in the nucleus. Its subcellular location is the cell projection. The protein localises to the cilium. It localises to the flagellum. The protein resides in the spindle. It is found in the nucleus envelope. Its subcellular location is the endoplasmic reticulum. Adapter protein implicated in the regulation of a large spectrum of both general and specialized signaling pathways. Binds to a large number of partners, usually by recognition of a phosphoserine or phosphothreonine motif. Binding generally results in the modulation of the activity of the binding partner. Binds with varying affinity to various synthetic phosphopeptides having a consensus binding motif RSX(pS/pT)XP, called mode-1, where X is any residue and pS/pT is a phosphorylated serine/threonine, and to synthetic phosphopeptides having a consensus binding motif Xp(S/T)X1-2-COOH, called mode-3, in which the phosphorylated residue occupies the penultimate C-terminal position in the target protein, but does not bind to their unphosphorylated counterparts. Binds to synthetic human RAF1 phosphopeptides, but not to their unphosphorylated forms. Binds to difopein, a polypeptide containing a phosphorylation-independent binding motif. Involved in encystation. Involved in cell proliferation. Required for actin and tubulin cytoskeletal organization. Regulates actin filament formation and nuclear size. The chain is 14-3-3 protein from Giardia intestinalis (strain ATCC 50803 / WB clone C6) (Giardia lamblia).